The following is a 351-amino-acid chain: Fe(3+) ions import ATP-binding protein FbpC (351 aa).

The 231-residue stretch at 7–237 (VELKNVTKRF…PASEFMASFM (231 aa)) folds into the ABC transporter domain. An ATP-binding site is contributed by 39–46 (GPSGCGKT).

It belongs to the ABC transporter superfamily. Fe(3+) ion importer (TC 3.A.1.10) family. The complex is composed of two ATP-binding proteins (FbpC), two transmembrane proteins (FbpB) and a solute-binding protein (FbpA).

It localises to the cell inner membrane. The catalysed reaction is Fe(3+)(out) + ATP + H2O = Fe(3+)(in) + ADP + phosphate + H(+). Part of the ABC transporter complex FbpABC involved in Fe(3+) ions import. Responsible for energy coupling to the transport system. The polypeptide is Fe(3+) ions import ATP-binding protein FbpC (Photorhabdus laumondii subsp. laumondii (strain DSM 15139 / CIP 105565 / TT01) (Photorhabdus luminescens subsp. laumondii)).